We begin with the raw amino-acid sequence, 616 residues long: Dihydroxy-acid dehydratase (616 aa).

Residue aspartate 81 participates in Mg(2+) binding. A [2Fe-2S] cluster-binding site is contributed by cysteine 122. Residues aspartate 123 and lysine 124 each contribute to the Mg(2+) site. Lysine 124 is modified (N6-carboxylysine). Residue cysteine 195 participates in [2Fe-2S] cluster binding. Glutamate 491 contacts Mg(2+). Residue serine 517 is the Proton acceptor of the active site.

The protein belongs to the IlvD/Edd family. Homodimer. [2Fe-2S] cluster serves as cofactor. It depends on Mg(2+) as a cofactor.

The enzyme catalyses (2R)-2,3-dihydroxy-3-methylbutanoate = 3-methyl-2-oxobutanoate + H2O. It catalyses the reaction (2R,3R)-2,3-dihydroxy-3-methylpentanoate = (S)-3-methyl-2-oxopentanoate + H2O. The protein operates within amino-acid biosynthesis; L-isoleucine biosynthesis; L-isoleucine from 2-oxobutanoate: step 3/4. It functions in the pathway amino-acid biosynthesis; L-valine biosynthesis; L-valine from pyruvate: step 3/4. Functions in the biosynthesis of branched-chain amino acids. Catalyzes the dehydration of (2R,3R)-2,3-dihydroxy-3-methylpentanoate (2,3-dihydroxy-3-methylvalerate) into 2-oxo-3-methylpentanoate (2-oxo-3-methylvalerate) and of (2R)-2,3-dihydroxy-3-methylbutanoate (2,3-dihydroxyisovalerate) into 2-oxo-3-methylbutanoate (2-oxoisovalerate), the penultimate precursor to L-isoleucine and L-valine, respectively. This is Dihydroxy-acid dehydratase from Yersinia enterocolitica serotype O:8 / biotype 1B (strain NCTC 13174 / 8081).